The sequence spans 687 residues: FAD-dependent oxidoreductase domain-containing protein 2 (687 aa).

A signal peptide spans 1–22 (MSVIQLVFRLLCVLDLLLAVSA). Asn29 and Asn305 each carry an N-linked (GlcNAc...) asparagine glycan.

This sequence belongs to the FOXRED2 family. FAD is required as a cofactor. N-glycosylated.

The protein resides in the endoplasmic reticulum lumen. Functionally, probable flavoprotein which may function in endoplasmic reticulum associated degradation (ERAD). May bind non-native proteins in the endoplasmic reticulum and target them to the ubiquitination machinery for subsequent degradation. The polypeptide is FAD-dependent oxidoreductase domain-containing protein 2 (foxred2) (Danio rerio (Zebrafish)).